We begin with the raw amino-acid sequence, 238 residues long: 3-dehydroquinate dehydratase (238 aa).

3-dehydroquinate is bound by residues 35–37 and Arg70; that span reads ELR. His133 acts as the Proton donor/acceptor in catalysis. Residue Lys160 is the Schiff-base intermediate with substrate of the active site. 3-dehydroquinate contacts are provided by Arg202 and Gln225.

It belongs to the type-I 3-dehydroquinase family. As to quaternary structure, homodimer.

It carries out the reaction 3-dehydroquinate = 3-dehydroshikimate + H2O. The protein operates within metabolic intermediate biosynthesis; chorismate biosynthesis; chorismate from D-erythrose 4-phosphate and phosphoenolpyruvate: step 3/7. In terms of biological role, involved in the third step of the chorismate pathway, which leads to the biosynthesis of aromatic amino acids. Catalyzes the cis-dehydration of 3-dehydroquinate (DHQ) and introduces the first double bond of the aromatic ring to yield 3-dehydroshikimate. The polypeptide is 3-dehydroquinate dehydratase (Staphylococcus aureus (strain Mu3 / ATCC 700698)).